The chain runs to 478 residues: TFIIA-alpha and beta-like factor (478 aa).

A disordered region spans residues 309-427; the sequence is VKQPRNIEEP…SGDDVSEQDV (119 aa). Residues 390–401 are compositionally biased toward polar residues; the sequence is SISNEDSATNSS. Residues 411–427 show a composition bias toward acidic residues; the sequence is VEEDPLNSGDDVSEQDV.

It belongs to the TFIIA subunit 1 family. In terms of tissue distribution, testis specific. Detected in adult testis mostly in round and elongating spermatids (at protein level). Detected in testis.

It localises to the nucleus. Functionally, may function as a testis specific transcription factor. Binds DNA in conjunction with GTF2A2 and TBP (the TATA-binding protein) and together with GTF2A2, allows mRNA transcription. The protein is TFIIA-alpha and beta-like factor (GTF2A1L) of Homo sapiens (Human).